The following is a 209-amino-acid chain: Uracil phosphoribosyltransferase (209 aa).

5-phospho-alpha-D-ribose 1-diphosphate is bound by residues Arg-79, Arg-104, and 131–139; that span reads DPMLATGGS. Residues Ile-194 and 199–201 contribute to the uracil site; that span reads GDA. A 5-phospho-alpha-D-ribose 1-diphosphate-binding site is contributed by Asp-200.

The protein belongs to the UPRTase family. It depends on Mg(2+) as a cofactor.

It carries out the reaction UMP + diphosphate = 5-phospho-alpha-D-ribose 1-diphosphate + uracil. Its pathway is pyrimidine metabolism; UMP biosynthesis via salvage pathway; UMP from uracil: step 1/1. With respect to regulation, allosterically activated by GTP. In terms of biological role, catalyzes the conversion of uracil and 5-phospho-alpha-D-ribose 1-diphosphate (PRPP) to UMP and diphosphate. The polypeptide is Uracil phosphoribosyltransferase (Latilactobacillus sakei (Lactobacillus sakei)).